Consider the following 311-residue polypeptide: 4-hydroxy-tetrahydrodipicolinate synthase (311 aa).

Position 51 (threonine 51) interacts with pyruvate. Tyrosine 140 (proton donor/acceptor) is an active-site residue. Lysine 168 functions as the Schiff-base intermediate with substrate in the catalytic mechanism. Isoleucine 209 contacts pyruvate.

It belongs to the DapA family. In terms of assembly, homotetramer; dimer of dimers.

Its subcellular location is the cytoplasm. It catalyses the reaction L-aspartate 4-semialdehyde + pyruvate = (2S,4S)-4-hydroxy-2,3,4,5-tetrahydrodipicolinate + H2O + H(+). The protein operates within amino-acid biosynthesis; L-lysine biosynthesis via DAP pathway; (S)-tetrahydrodipicolinate from L-aspartate: step 3/4. In terms of biological role, catalyzes the condensation of (S)-aspartate-beta-semialdehyde [(S)-ASA] and pyruvate to 4-hydroxy-tetrahydrodipicolinate (HTPA). This Streptococcus suis (strain 98HAH33) protein is 4-hydroxy-tetrahydrodipicolinate synthase.